Here is a 351-residue protein sequence, read N- to C-terminus: F-box protein At1g70590 (351 aa).

The disordered stretch occupies residues 1–60 (MKQRTWPCRSEGSRFSSLSFLKPHDKDKRSRISSINKATAKSTTSSRSSSSSSSSRPPSN). Polar residues predominate over residues 32–41 (ISSINKATAK). Residues 42 to 59 (STTSSRSSSSSSSSRPPS) are compositionally biased toward low complexity. The F-box domain maps to 62-111 (FGDFSMLPYDILMKIAAPFSHPNLQAASLVCKSWRDALKPLRESMLLIRW). The Sel1-like repeat unit spans residues 105 to 141 (SMLLIRWGKKYKHGRGGVRANLDKALDSFLKGAMRGS). Residues 142–175 (TLAMVDAGLVYWERGEKEKAVNLYRRASELGDAV) form a TPR repeat.

This chain is F-box protein At1g70590, found in Arabidopsis thaliana (Mouse-ear cress).